Here is a 431-residue protein sequence, read N- to C-terminus: Venom metalloproteinase 1 (431 aa).

Positions 1 to 22 (MDLFILTRFILFLSFFMKSIHC) are cleaved as a signal peptide. 4 N-linked (GlcNAc...) asparagine glycosylation sites follow: Asn64, Asn113, Asn148, and Asn187. The region spanning 228 to 428 (DLLMKTSRRL…TSAACLKDTY (201 aa)) is the Peptidase M12B domain. Intrachain disulfides connect Cys340–Cys423 and Cys379–Cys407. His363 lines the Zn(2+) pocket. Residue Glu364 is part of the active site. The Zn(2+) site is built by His367 and His373. The N-linked (GlcNAc...) asparagine glycan is linked to Asn414.

This sequence in the C-terminal section; belongs to the venom metalloproteinase (M12B) family. In terms of assembly, monomer. It depends on Zn(2+) as a cofactor. As to expression, expressed by the venom gland.

The protein localises to the secreted. Its activity is regulated as follows. The gelatinase activity is inhibited by EDTA. In terms of biological role, the recombinant protein has gelatinase activity. In vivo, injection of this recombinant into fifth instar L.oleracea (host) larvae results in partial insect mortality associated with the molt to sixth instar, with surviving insects showing retarded development and growth. The sequence is that of Venom metalloproteinase 1 from Eulophus pennicornis (Parasitoid wasp).